Here is a 773-residue protein sequence, read N- to C-terminus: uncharacterized protein (773 aa).

A disordered region spans residues 192 to 219 (EASGTNNNPKEIEMNSDTTSSVPKSGST).

It localises to the cytoplasm. This is an uncharacterized protein from Schizosaccharomyces pombe (strain 972 / ATCC 24843) (Fission yeast).